An 85-amino-acid polypeptide reads, in one-letter code: UPF0297 protein CD630_12830 (85 aa).

It belongs to the UPF0297 family.

The polypeptide is UPF0297 protein CD630_12830 (Clostridioides difficile (strain 630) (Peptoclostridium difficile)).